The sequence spans 351 residues: Modulator of apoptosis 1 (351 aa).

The LIR motif lies at 49 to 52 (YRLL). The segment at 120–127 (LTRALAHE) is BH3-like. Residues 202-205 (KRRR) form an RASSF1-binding region.

Belongs to the PNMA family. In terms of assembly, homodimer. Under normal circumstances, held in an inactive conformation by an intramolecular interaction. Interacts with BAX. Binding to RASSF1 isoform A (RASSF1A) relieves this inhibitory interaction and allows further binding to BAX. Also binds to BCL2 and BCLX. Recruited to the TNFRSF1A and TNFRSF10A complexes in response to their respective cognate ligand, after internalization. Interacts with TRIM39. Interacts with RASSF6. Interacts with ATG8 proteins MAP1LC3A, MAP1LC3B and MAP1LC3C. Does not interact with ATG8 proteins GABARAPL1, GABARAPL2 and GABARAP. Interacts with SQSTM1; promoting dissociation of SQSTM1 inclusion bodies that sequester KEAP1. In terms of processing, ubiquitinated and degraded during mitotic exit by APC/C-Cdh1, this modification is inhibited by TRIM39.

The protein resides in the cytoplasm. It is found in the cytosol. It localises to the mitochondrion outer membrane. The protein localises to the extracellular vesicle membrane. In terms of biological role, retrotransposon-derived protein that forms virion-like capsids. Acts as an effector of BAX during apoptosis: enriched at outer mitochondria membrane and associates with BAX upon induction of apoptosis, facilitating BAX-dependent mitochondrial outer membrane permeabilization and apoptosis. Required for death receptor-dependent apoptosis. When associated with RASSF1, promotes BAX conformational change and translocation to mitochondrial membranes in response to TNF and TNFSF10 stimulation. Also promotes autophagy: promotes phagophore closure via association with ATG8 proteins. Acts as an inhibitor of the NFE2L2/NRF2 pathway via interaction with SQSTM1: interaction promotes dissociation of SQSTM1 inclusion bodies that sequester KEAP1, relieving inactivation of the BCR(KEAP1) complex. The polypeptide is Modulator of apoptosis 1 (Macaca fascicularis (Crab-eating macaque)).